A 403-amino-acid polypeptide reads, in one-letter code: Dynactin subunit 2 (403 aa).

Residues 1–26 are disordered; it reads MADPKYADLPGIARNEPDVYETSDLP. Ala-2 is subject to N-acetylalanine. Tyr-6 is subject to Phosphotyrosine. The residue at position 83 (Ser-83) is a Phosphoserine. Phosphotyrosine is present on Tyr-86. Residues 100–130 are a coiled coil; that stretch reads QQKYQRLLHEVQELTTEVEKIKTTVKESATE. Thr-134 and Thr-200 each carry phosphothreonine. The tract at residues 184-204 is disordered; that stretch reads TKNSKGTGSGGKTTSGTPPDS. Residues 216 to 248 adopt a coiled-coil conformation; sequence EQDKFSQAAKVAELEKRLTELEATVRCDQDAQN. Residue Ser-322 is modified to Phosphoserine.

Belongs to the dynactin subunit 2 family. As to quaternary structure, subunit of dynactin, a multiprotein complex part of a tripartite complex with dynein and a adapter, such as BICDL1, BICD2 or HOOK3. The dynactin complex is built around ACTR1A/ACTB filament and consists of an actin-related filament composed of a shoulder domain, a pointed end and a barbed end. Its length is defined by its flexible shoulder domain. The soulder is composed of 2 DCTN1 subunits, 4 DCTN2 and 2 DCTN3. The 4 DCNT2 (via N-terminus) bind the ACTR1A filament and act as molecular rulers to determine the length. The pointed end is important for binding dynein-dynactin cargo adapters and consists of 4 subunits: ACTR10, DCNT4, DCTN5 and DCTN6. The barbed end is composed of a CAPZA1:CAPZB heterodimers, which binds ACTR1A/ACTB filament and dynactin and stabilizes dynactin. Interacts with BICD2 and CEP135. Interacts with DYNAP. Interacts with ECPAS. Interacts with MAPRE1.

The protein resides in the cytoplasm. Its subcellular location is the cytoskeleton. The protein localises to the microtubule organizing center. It is found in the centrosome. It localises to the membrane. Its function is as follows. Part of the dynactin complex that activates the molecular motor dynein for ultra-processive transport along microtubules. In the dynactin soulder domain, binds the ACTR1A filament and acts as a molecular ruler to determine the length. Modulates cytoplasmic dynein binding to an organelle, and plays a role in prometaphase chromosome alignment and spindle organization during mitosis. Involved in anchoring microtubules to centrosomes. May play a role in synapse formation during brain development. This chain is Dynactin subunit 2 (DCTN2), found in Bos taurus (Bovine).